We begin with the raw amino-acid sequence, 92 residues long: Beta-2-microglobulin (92 aa).

Residues 2 to 89 (PQIQVYSRHP…NHVSMDKPMT (88 aa)) enclose the Ig-like C1-type domain. Cys22 and Cys77 are disulfide-bonded.

The protein belongs to the beta-2-microglobulin family. As to quaternary structure, heterodimer of an alpha chain and a beta chain. Beta-2-microglobulin is the beta-chain of major histocompatibility complex class I molecules.

Its subcellular location is the secreted. Its function is as follows. Component of the class I major histocompatibility complex (MHC). Involved in the presentation of peptide antigens to the immune system. This is Beta-2-microglobulin (B2m) from Mus spretus (Western Mediterranean mouse).